The chain runs to 143 residues: Sperm mitochondrial-associated cysteine-rich protein (143 aa).

3 positions are modified to phosphoserine: S37, S44, and S110. Residues 101 to 143 (CCSSENKTESDSDTSGQTLEKGSQSPQSPPGAQGNWNQKKSNK) are disordered. A compositionally biased stretch (polar residues) spans 113-126 (DTSGQTLEKGSQSP). S128 carries the post-translational modification Phosphoserine. Over residues 134–143 (GNWNQKKSNK) the composition is skewed to polar residues.

Testis. Is selectively expressed in the spermatids of seminiferous tubules.

The protein resides in the cytoplasm. It localises to the mitochondrion membrane. In terms of biological role, involved in sperm motility. Its absence is associated with genetic background dependent male infertility. Infertility may be due to reduced sperm motility in the female reproductive tract and inability to penetrate the oocyte zona pellucida. The sequence is that of Sperm mitochondrial-associated cysteine-rich protein (Smcp) from Mus musculus (Mouse).